Here is a 380-residue protein sequence, read N- to C-terminus: Glucose-1-phosphate adenylyltransferase (380 aa).

Alpha-D-glucose 1-phosphate-binding positions include Tyr-100, Gly-165, Glu-180–Lys-181, and Ser-191.

This sequence belongs to the bacterial/plant glucose-1-phosphate adenylyltransferase family. In terms of assembly, homotetramer.

The enzyme catalyses alpha-D-glucose 1-phosphate + ATP + H(+) = ADP-alpha-D-glucose + diphosphate. It functions in the pathway glycan biosynthesis; glycogen biosynthesis. In terms of biological role, involved in the biosynthesis of ADP-glucose, a building block required for the elongation reactions to produce glycogen. Catalyzes the reaction between ATP and alpha-D-glucose 1-phosphate (G1P) to produce pyrophosphate and ADP-Glc. This is Glucose-1-phosphate adenylyltransferase from Clostridium acetobutylicum (strain ATCC 824 / DSM 792 / JCM 1419 / IAM 19013 / LMG 5710 / NBRC 13948 / NRRL B-527 / VKM B-1787 / 2291 / W).